The sequence spans 701 residues: Larval serum protein 2 (701 aa).

A signal peptide spans 1-21 (MKSFTVIALAAVALLATLGQA). Asn-204 carries an N-linked (GlcNAc...) asparagine glycan.

It belongs to the hemocyanin family. As to quaternary structure, homohexamer.

It localises to the secreted. It is found in the extracellular space. Larval storage protein (LSP) which may serve as a store of amino acids for synthesis of adult proteins. The sequence is that of Larval serum protein 2 (Lsp2) from Drosophila melanogaster (Fruit fly).